The chain runs to 320 residues: Ribosomal RNA small subunit methyltransferase H (320 aa).

Residues 42–44 (GGH), Asp62, Phe86, Asp108, and Gln115 contribute to the S-adenosyl-L-methionine site.

It belongs to the methyltransferase superfamily. RsmH family.

Its subcellular location is the cytoplasm. It catalyses the reaction cytidine(1402) in 16S rRNA + S-adenosyl-L-methionine = N(4)-methylcytidine(1402) in 16S rRNA + S-adenosyl-L-homocysteine + H(+). Specifically methylates the N4 position of cytidine in position 1402 (C1402) of 16S rRNA. The polypeptide is Ribosomal RNA small subunit methyltransferase H (Yersinia pseudotuberculosis serotype O:1b (strain IP 31758)).